Here is a 125-residue protein sequence, read N- to C-terminus: Large ribosomal subunit protein bL12 (125 aa).

It belongs to the bacterial ribosomal protein bL12 family. In terms of assembly, homodimer. Part of the ribosomal stalk of the 50S ribosomal subunit. Forms a multimeric L10(L12)X complex, where L10 forms an elongated spine to which 2 to 4 L12 dimers bind in a sequential fashion. Binds GTP-bound translation factors.

Functionally, forms part of the ribosomal stalk which helps the ribosome interact with GTP-bound translation factors. Is thus essential for accurate translation. This chain is Large ribosomal subunit protein bL12, found in Rickettsia felis (strain ATCC VR-1525 / URRWXCal2) (Rickettsia azadi).